The following is a 995-amino-acid chain: Secreted protein CSS1 (995 aa).

Positions M1–G23 are cleaved as a signal peptide. Residues Y26 to V253 form the Methyl-accepting transducer domain. Residues N28 and N35 are each glycosylated (N-linked (GlcNAc...) asparagine). The disordered stretch occupies residues S98 to S276. N-linked (GlcNAc...) asparagine glycosylation is found at N468 and N664.

Belongs to the SRP1/TIP1 family.

The protein resides in the secreted. Secreted protein that may be involved in cell wall organization and biosynthesis. The protein is Secreted protein CSS1 of Saccharomyces cerevisiae (strain ATCC 204508 / S288c) (Baker's yeast).